A 156-amino-acid chain; its full sequence is Snaclec A15 (156 aa).

An N-terminal signal peptide occupies residues 1 to 23 (MGRFIFVRFGLLVVFLSLSGTGA). Disulfide bonds link C27–C38, C55–C152, and C127–C144. Positions 34–153 (YDQHCYKAFD…CGDDYPFVCK (120 aa)) constitute a C-type lectin domain. Residue N141 is glycosylated (N-linked (GlcNAc...) asparagine).

The protein belongs to the snaclec family. Heterodimer; disulfide-linked. In terms of tissue distribution, expressed by the venom gland.

The protein resides in the secreted. Interferes with one step of hemostasis (modulation of platelet aggregation, or coagulation cascade, for example). The protein is Snaclec A15 of Macrovipera lebetinus (Levantine viper).